A 462-amino-acid chain; its full sequence is Glycine--tRNA ligase (462 aa).

2 residues coordinate substrate: Arg-101 and Glu-164. Residues 196 to 198 (RNE), 206 to 211 (FRTREF), 283 to 284 (EL), and 327 to 330 (GVDR) contribute to the ATP site. 211 to 215 (FEQME) lines the substrate pocket. 323–327 (EPSAG) provides a ligand contact to substrate.

It belongs to the class-II aminoacyl-tRNA synthetase family. In terms of assembly, homodimer.

The protein localises to the cytoplasm. It catalyses the reaction tRNA(Gly) + glycine + ATP = glycyl-tRNA(Gly) + AMP + diphosphate. Its function is as follows. Catalyzes the attachment of glycine to tRNA(Gly). This chain is Glycine--tRNA ligase, found in Thermobifida fusca (strain YX).